The following is a 483-amino-acid chain: Keratin, type II cytoskeletal 8 (483 aa).

Over residues 1–25 (MSVRVTQKSYKMSTSGPRAFSSRSF) the composition is skewed to polar residues. Residues 1–43 (MSVRVTQKSYKMSTSGPRAFSSRSFTSGPGARISSSSFSRVGS) are disordered. Residues 1 to 90 (MSVRVTQKSY…DPNIQAVRTQ (90 aa)) are head. A Phosphoserine; by PKC/PRKCE modification is found at S9. Residue K11 forms a Glycyl lysine isopeptide (Lys-Gly) (interchain with G-Cter in SUMO2) linkage. Residues S13, S15, S21, and S22 each carry the phosphoserine modification. Residue R23 is modified to Omega-N-methylarginine. A Phosphoserine; by PKC/PRKCE modification is found at S24. S24 is subject to Phosphoserine. T26 is modified (phosphothreonine). Low complexity predominate over residues 26–43 (TSGPGARISSSSFSRVGS). S27 is subject to Phosphoserine. An Omega-N-methylarginine modification is found at R32. Residues S34, S37, and S39 each carry the phosphoserine modification. R40 bears the Omega-N-methylarginine mark. Phosphoserine occurs at positions 43, 44, and 47. At R49 the chain carries Asymmetric dimethylarginine; alternate. An Omega-N-methylarginine; alternate modification is found at R49. The residue at position 51 (S51) is a Phosphoserine. The interval 91 to 126 (EKEQIKTLNNKFASFIDKVRFLEQQNKMLETKWSLL) is coil 1A. Positions 91–402 (EKEQIKTLNN…KLLEGEESRL (312 aa)) constitute an IF rod domain. K101 bears the N6-malonyllysine mark. Residues K122 and K130 each participate in a glycyl lysine isopeptide (Lys-Gly) (interchain with G-Cter in SUMO2) cross-link. Residues 127-143 (QQQKTSRSNMDNMFESY) are linker 1. Residues 144-235 (INNLRRQLEA…QIHEEEIREL (92 aa)) form a coil 1B region. K197 is covalently cross-linked (Glycyl lysine isopeptide (Lys-Gly) (interchain with G-Cter in SUMO1); alternate). K197 is covalently cross-linked (Glycyl lysine isopeptide (Lys-Gly) (interchain with G-Cter in SUMO2); alternate). The residue at position 207 (K207) is an N6-acetyllysine. The tract at residues 236–259 (QSQISDTSVVLSMDNSRSLDMDSI) is linker 12. A phosphoserine mark is found at S253, S258, and S274. Residues 260–398 (IAEVRAQYEE…ATYRKLLEGE (139 aa)) form a coil 2 region. Positions 261-382 (AEVRAQYEEI…EYQELMNVKL (122 aa)) are necessary for interaction with PNN. Residue K285 forms a Glycyl lysine isopeptide (Lys-Gly) (interchain with G-Cter in SUMO2) linkage. K295 participates in a covalent cross-link: Glycyl lysine isopeptide (Lys-Gly) (interchain with G-Cter in SUMO2); alternate. The residue at position 295 (K295) is an N6-acetyllysine; alternate. Residue K304 forms a Glycyl lysine isopeptide (Lys-Gly) (interchain with G-Cter in SUMO2) linkage. K325 is covalently cross-linked (Glycyl lysine isopeptide (Lys-Gly) (interchain with G-Cter in SUMO2); alternate). K325 bears the N6-acetyllysine; alternate mark. K393 is covalently cross-linked (Glycyl lysine isopeptide (Lys-Gly) (interchain with G-Cter in SUMO2)). Residues 399–483 (ESRLESGMQN…VSESSDIMSK (85 aa)) are tail. 7 positions are modified to phosphoserine: S400, S404, S410, S417, S424, S426, and S432. Residue K472 forms a Glycyl lysine isopeptide (Lys-Gly) (interchain with G-Cter in SUMO1); alternate linkage. K472 is covalently cross-linked (Glycyl lysine isopeptide (Lys-Gly) (interchain with G-Cter in SUMO2); alternate). 4 positions are modified to phosphoserine: S475, S477, S478, and S482.

The protein belongs to the intermediate filament family. In terms of assembly, heterotetramer of two type I and two type II keratins. Forms a heterodimer with KRT18. Associates with KRT20. Interacts with PNN. When associated with KRT19, interacts with DMD. Interacts with TCHP. Interacts with APEX1. Interacts with GPER1. Interacts with EPPK1. Interacts with PKP1 and PKP2. O-glycosylated. O-GlcNAcylation at multiple sites increases solubility, and decreases stability by inducing proteasomal degradation. Post-translationally, O-glycosylated (O-GlcNAcylated), in a cell cycle-dependent manner. As to expression, expressed in cardiac and striated muscle. Expressed at Z-lines within the muscle fibers and at Z-line and M-line domains at costameres at the sarcolemmal membrane (at protein level). Observed in coagulating gland, bladder, salivary gland, kidney, spleen, thymus, lung and heart. Also observed in ventral prostate, seminal vesicle and liver where expression increases following castration.

Its subcellular location is the cytoplasm. The protein resides in the nucleus. It is found in the nucleoplasm. The protein localises to the nucleus matrix. Together with KRT19, helps to link the contractile apparatus to dystrophin at the costameres of striated muscle. This is Keratin, type II cytoskeletal 8 (Krt8) from Rattus norvegicus (Rat).